The chain runs to 106 residues: Large ribosomal subunit protein P1 (106 aa).

Over residues 66–76 (AQPQATQAQPA) the composition is skewed to low complexity. A disordered region spans residues 66–106 (AQPQATQAQPAAEEKKEEKKEEEKKGPSEEEIASGLASLFG). A compositionally biased stretch (basic and acidic residues) spans 77–93 (AEEKKEEKKEEEKKGPS).

It belongs to the eukaryotic ribosomal protein P1/P2 family. Part of the 50S ribosomal subunit. Homodimer, it forms part of the ribosomal stalk which helps the ribosome interact with GTP-bound translation factors. Forms a heptameric uL10/P0(P1)2(P1)2(P1)2 complex, where uL10/P0 forms an elongated spine to which the P1 dimers bind in a sequential fashion.

Functionally, forms part of the ribosomal stalk, playing a central role in the interaction of the ribosome with GTP-bound translation factors. This chain is Large ribosomal subunit protein P1, found in Saccharolobus solfataricus (strain ATCC 35092 / DSM 1617 / JCM 11322 / P2) (Sulfolobus solfataricus).